Consider the following 520-residue polypeptide: BBSome complex member BBS4 (520 aa).

The interval 1–26 is disordered; that stretch reads MAEVKLGMKTQVPASVESQKPRSKKA. The interval 1–66 is required for localization to centrosomes; it reads MAEVKLGMKT…EQLQETQGLC (66 aa). TPR repeat units follow at residues 67–100, 102–134, 135–167, 168–201, 203–235, 237–269, 270–303, 304–337, 339–371, and 373–408; these read EYAI…SPQC, DNLK…NQKD, WEIC…LNKH, DLTY…SPEN, ELLT…DPAN, KAIL…IPES, PPLW…APFD, WKIL…QPKM, ELYM…DKCN, and LVNL…LKDN. Residues 101 to 337 form an interaction with PCM1 region; it reads ADNLKQVARS…SAAINFQPKM (237 aa). Positions 338 to 520 are required for localization to centrosomes; it reads GELYMLLAVA…TEASEQKKEK (183 aa). The interval 488-520 is disordered; sequence AQLPKPPSLPLEPEPEPTVEASPTEASEQKKEK.

This sequence belongs to the BBS4 family. As to quaternary structure, part of BBSome complex, that contains BBS1, BBS2, BBS4, BBS5, BBS7, BBS8/TTC8, BBS9 and BBIP10. Interacts with PCM1 and DCTN1. Interacts with DC28B. Interacts with ALDOB and C2CD3. Interacts with PKD1. Interacts with CEP290. Interacts with DLEC1. As to expression, expressed in the hippocampus and dentate gyrus, the columnar epithelial cells of bronchioles, the olfactory epithelium and the inner segment and outer nuclear layer of the retina. Expressed in testis.

It localises to the cytoplasm. The protein resides in the cytoskeleton. The protein localises to the microtubule organizing center. Its subcellular location is the centrosome. It is found in the cell projection. It localises to the cilium membrane. The protein resides in the centriolar satellite. The protein localises to the cilium. Its subcellular location is the flagellum. The BBSome complex is thought to function as a coat complex required for sorting of specific membrane proteins to the primary cilia. The BBSome complex is required for ciliogenesis but is dispensable for centriolar satellite function. This ciliogenic function is mediated in part by the Rab8 GDP/GTP exchange factor, which localizes to the basal body and contacts the BBSome. Rab8(GTP) enters the primary cilium and promotes extension of the ciliary membrane. Firstly the BBSome associates with the ciliary membrane and binds to RAB3IP/Rabin8, the guanosyl exchange factor (GEF) for Rab8 and then the Rab8-GTP localizes to the cilium and promotes docking and fusion of carrier vesicles to the base of the ciliary membrane. The BBSome complex, together with the LTZL1, controls SMO ciliary trafficking and contributes to the sonic hedgehog (SHH) pathway regulation. Required for proper BBSome complex assembly and its ciliary localization. Required for microtubule anchoring at the centrosome but not for microtubule nucleation. May be required for the dynein-mediated transport of pericentriolar proteins to the centrosome. The polypeptide is BBSome complex member BBS4 (Bbs4) (Mus musculus (Mouse)).